Consider the following 660-residue polypeptide: MLNKIKLQQKRKLIIGWSVFALINLVVILLTVLLRAGLPNLVSKGVTPFSAQAFGDAFIFLITRVYLDNFLRQPALLLGVITLIGYLALGRGGVQSVVGALKTVIGFILLSIGSGVLVSTARPVFDTIKGLGGTGVVLLDPYFSLASANDFFTNSFLNNDYVSLIAFSLLVGFIVNIIFVGLKRWTNTNSIMVTGHVMLQQAAVVTTLFYIVLFRQIPLLGTGIAYGAQAGLVIISGIFLGVYWSTASTGTYLVTNKVTNNAGFSIGHQQMLGIMTVAKLGKYFGDKNDSAEHKKLPKALKIFEDNIFTQTIIILSLFVVLFIVILASYKGDKPLLINWDKFGAINGLEIWNTTFGGANFTLNIIGGALKMVASLIAIMTGVRMFITELQQAFQGISEKVVPGAVVAVDIAAVYGFSINSVTFGFLSGVIGQFLAVAIMAGISYIPGNQFSFVAIPLFITLFFNSGAFGVYANAEGGWKAALLLPGIIGFLEIIVISFALRTVSNAYQASALLDAKQSFDLKALMGNSLDNNNGSALKTAVEKVVNATGVNRITEAQSFVKSDSFNSLKAVNSTLAQAIEWISKSASPVDNGFIGMADWNLYFGLLVWIGAYNVIGGWILVILATVGLILLAQIIDNGKQTKVTKLQQLLKINPQLDLNN.

Helical transmembrane passes span 14 to 34, 74 to 94, and 98 to 118; these read IIGWSVFALINLVVILLTVLL, PALLLGVITLIGYLALGRGGV, and VGALKTVIGFILLSIGSGVLV. An L-ascorbate-binding site is contributed by 141-142; sequence PY. 3 helical membrane passes run 162–182, 194–214, and 224–244; these read VSLIAFSLLVGFIVNIIFVGL, TGHVMLQQAAVVTTLFYIVLF, and IAYGAQAGLVIISGIFLGVYW. 196-200 contributes to the L-ascorbate binding site; that stretch reads HVMLQ. 268 to 269 serves as a coordination point for L-ascorbate; the sequence is HQ. The next 7 membrane-spanning stretches (helical) occupy residues 307 to 327, 362 to 382, 401 to 421, 422 to 442, 450 to 470, 592 to 612, and 615 to 635; these read IFTQTIIILSLFVVLFIVILA, LNIIGGALKMVASLIAIMTGV, VPGAVVAVDIAAVYGFSINSV, TFGFLSGVIGQFLAVAIMAGI, FSFVAIPLFITLFFNSGAFGV, GFIGMADWNLYFGLLVWIGAY, and IGGWILVILATVGLILLAQII. Position 409 (aspartate 409) interacts with L-ascorbate.

Belongs to the UlaA family. In terms of assembly, homodimer.

It is found in the cell membrane. Functionally, the phosphoenolpyruvate-dependent sugar phosphotransferase system (sugar PTS), a major carbohydrate active transport system, catalyzes the phosphorylation of incoming sugar substrates concomitantly with their translocation across the cell membrane. The enzyme II UlaABC PTS system is involved in ascorbate transport. The polypeptide is Ascorbate-specific PTS system EIIC component (ulaA) (Mycoplasma pneumoniae (strain ATCC 29342 / M129 / Subtype 1) (Mycoplasmoides pneumoniae)).